Consider the following 190-residue polypeptide: Glutathione peroxidase 2 (190 aa).

Sec-40 is an active-site residue. Position 40 (Sec-40) is a non-standard amino acid, selenocysteine.

This sequence belongs to the glutathione peroxidase family. Homotetramer.

The protein localises to the cytoplasm. The protein resides in the cytosol. It carries out the reaction 2 glutathione + H2O2 = glutathione disulfide + 2 H2O. It catalyses the reaction a hydroperoxy polyunsaturated fatty acid + 2 glutathione = a hydroxy polyunsaturated fatty acid + glutathione disulfide + H2O. The catalysed reaction is tert-butyl hydroperoxide + 2 glutathione = tert-butanol + glutathione disulfide + H2O. The enzyme catalyses cumene hydroperoxide + 2 glutathione = 2-phenylpropan-2-ol + glutathione disulfide + H2O. It carries out the reaction (13S)-hydroperoxy-(9Z,11E)-octadecadienoate + 2 glutathione = (13S)-hydroxy-(9Z,11E)-octadecadienoate + glutathione disulfide + H2O. It catalyses the reaction (5S)-hydroperoxy-(6E,8Z,11Z,14Z)-eicosatetraenoate + 2 glutathione = (5S)-hydroxy-(6E,8Z,11Z,14Z)-eicosatetraenoate + glutathione disulfide + H2O. The catalysed reaction is (12R)-hydroperoxy-(5Z,8Z,10E,14Z)-eicosatetraenoate + 2 glutathione = (12R)-hydroxy-(5Z,8Z,10E,14Z)-eicosatetraenoate + glutathione disulfide + H2O. The enzyme catalyses (15S)-hydroperoxy-(5Z,8Z,11Z,13E)-eicosatetraenoate + 2 glutathione = (15S)-hydroxy-(5Z,8Z,11Z,13E)-eicosatetraenoate + glutathione disulfide + H2O. In terms of biological role, catalyzes the reduction of hydroperoxides in a glutathione-dependent manner thus regulating cellular redox homeostasis. Can reduce small soluble hydroperoxides such as H2O2, cumene hydroperoxide and tert-butyl hydroperoxide, as well as several fatty acid-derived hydroperoxides. Cannot reduce phosphatidycholine hydroperoxide. This chain is Glutathione peroxidase 2 (GPX2), found in Sapajus apella (Brown-capped capuchin).